The following is a 700-amino-acid chain: Elongation factor G (700 aa).

Positions 6-286 (HKVRNIGIMA…AVIDYLPSPL (281 aa)) constitute a tr-type G domain. Residues 15-22 (AHIDAGKT), 79-83 (DTPGH), and 133-136 (NKMD) each bind GTP.

The protein belongs to the TRAFAC class translation factor GTPase superfamily. Classic translation factor GTPase family. EF-G/EF-2 subfamily.

Its subcellular location is the cytoplasm. Its function is as follows. Catalyzes the GTP-dependent ribosomal translocation step during translation elongation. During this step, the ribosome changes from the pre-translocational (PRE) to the post-translocational (POST) state as the newly formed A-site-bound peptidyl-tRNA and P-site-bound deacylated tRNA move to the P and E sites, respectively. Catalyzes the coordinated movement of the two tRNA molecules, the mRNA and conformational changes in the ribosome. This Leifsonia xyli subsp. xyli (strain CTCB07) protein is Elongation factor G.